Here is a 476-residue protein sequence, read N- to C-terminus: Cytochrome P450 6B5 (476 aa).

Cys443 serves as a coordination point for heme.

It belongs to the cytochrome P450 family. The cofactor is heme.

The protein localises to the endoplasmic reticulum membrane. Its subcellular location is the microsome membrane. The catalysed reaction is an organic molecule + reduced [NADPH--hemoprotein reductase] + O2 = an alcohol + oxidized [NADPH--hemoprotein reductase] + H2O + H(+). Enables the insect to feed on furanocoumarin-producing plants and evolved as an adaptation for detoxification of xanthotoxin and other furanocoumarins. The sequence is that of Cytochrome P450 6B5 (CYP6B5) from Papilio glaucus (Eastern tiger swallowtail butterfly).